The chain runs to 541 residues: FAD-linked oxidoreductase pynB (541 aa).

Positions 1–20 are cleaved as a signal peptide; sequence MRLSARGFVWSALLACTASA. N-linked (GlcNAc...) asparagine glycosylation is found at Asn-30, Asn-57, Asn-117, Asn-131, Asn-158, Asn-253, Asn-306, Asn-343, Asn-430, and Asn-461. The 172-residue stretch at 71–242 folds into the FAD-binding PCMH-type domain; it reads FNEFPALIAY…VDFDLQLMQF (172 aa).

This sequence belongs to the oxygen-dependent FAD-linked oxidoreductase family. FAD serves as cofactor.

It functions in the pathway secondary metabolite biosynthesis. FAD-linked oxidoreductase; part of the gene cluster that mediates the biosynthesis of pyranonigrins, a family of antioxidative compounds. The first step of pyranonigrins biosynthesis is performed by the hybrid PKS-NRPS synthetase that condenses 6 malonyl-CoA units to an acetyl starter unit, to form a 1,3,5-trioxotetradecane-6,8-dienyl-ACP. The enoyl reductase (ER) domain of pynA is likely to be functional during the first two rounds of polyketide chain extension, to generate the saturated C-C bonds of the alkyl side chain. PynA subsequently forms the amide bond between the acyl chain and L-serine. Although pynA has a terminal reductase domain, it appears to require the thioesterase pynI for the release of the straight-chain intermediate from pynA via the formation of a tetramic acid pyranonigrin J. The methyltransferase pynC then coverts pyranonigrin J to pyranonigrin I via N-methylation. The FAD-dependent monooxygenase pynG catalyzes an epoxidation-mediated cyclization to form the dihydro-gamma-pyrone moiety, followed by pynD-catalyzed oxidation of the alcohol to the ketone and enolization to yield the characteristic tetramic acid-fused gamma-pyrone core of pyranonigrin H. Pyranonigrin H is substrate of pynH for dehydration-mediated exo-methylene formation from the serine side chain to produce pyranonigrin E, before the oxidase pynE reduces the exo-methylene of pyranonigrin E into a pendant methyl to form pyranonigrin G. The FAD-linked oxidoreductase pynB performs the reverse reaction and converts pyranonigrin G back to pyranonigrin E. This is FAD-linked oxidoreductase pynB from Aspergillus niger (strain ATCC MYA-4892 / CBS 513.88 / FGSC A1513).